The sequence spans 276 residues: Undecaprenyl-diphosphatase 2 (276 aa).

8 helical membrane-spanning segments follow: residues 1-21 (MSLWFLVFLSVLQGVTELFPV), 44-64 (QLLPFLVALHLGTALALLWYF), 87-107 (GHLMWALIIGTIPTGIVGLLL), 114-134 (VFHDLRIVAIALIVNGVLLWL), 150-170 (MTFKQAFFVGLAQIGALIPGF), 190-210 (AAEFSFLLGTPIIFAAGVLEL), 222-242 (DALLGGVLTAIAAYLSVRFLM), and 251-271 (LASFGVYCVIAGVFCLGWFML).

This sequence belongs to the UppP family.

The protein localises to the cell inner membrane. It carries out the reaction di-trans,octa-cis-undecaprenyl diphosphate + H2O = di-trans,octa-cis-undecaprenyl phosphate + phosphate + H(+). Functionally, catalyzes the dephosphorylation of undecaprenyl diphosphate (UPP). Confers resistance to bacitracin. The polypeptide is Undecaprenyl-diphosphatase 2 (Burkholderia lata (strain ATCC 17760 / DSM 23089 / LMG 22485 / NCIMB 9086 / R18194 / 383)).